The chain runs to 1028 residues: Contactin-3 (1028 aa).

The N-terminal stretch at 1–19 (MMLSWKQLILLSFIGCLAG) is a signal peptide. Ig-like C2-type domains follow at residues 32 to 117 (PSNS…AKLQ), 122 to 209 (ENFK…RVLG), 227 to 313 (PKIE…GRLT), 318 to 402 (PYWL…AELK), 408 to 497 (PDFS…LVVT), and 499 to 593 (PTRI…AELI). 5 disulfide bridges follow: Cys50–Cys100, Cys144–Cys196, Cys249–Cys297, Cys339–Cys386, and Cys431–Cys479. N-linked (GlcNAc...) asparagine glycosylation is found at Asn65 and Asn193. Asn377, Asn468, and Asn489 each carry an N-linked (GlcNAc...) asparagine glycan. Cysteines 521 and 577 form a disulfide. 4 Fibronectin type-III domains span residues 600–698 (PPEN…TEEA), 703–800 (APSE…SAEE), 805–901 (APSH…TKKT), and 902–998 (PPSQ…TSMD). The segment at 684-714 (GEPSLPSEKVRTEEAAPEIAPSEVSGGGGSR) is disordered. 6 N-linked (GlcNAc...) asparagine glycosylation sites follow: Asn765, Asn860, Asn895, Asn913, Asn931, and Asn956. Ser1002 carries the GPI-anchor amidated serine lipid modification. Residues 1003 to 1028 (TSAISNIHPLSGYMSVLLFFIVNALW) constitute a propeptide, removed in mature form.

Belongs to the immunoglobulin superfamily. Contactin family. As to quaternary structure, interacts with PTPRG. Specifically expressed in brain. Ectopically expressed in tumors expressing endogenous intracisternal A-type particles (IAPs).

The protein localises to the cell membrane. Its function is as follows. Contactins mediate cell surface interactions during nervous system development. Has some neurite outgrowth-promoting activity. The polypeptide is Contactin-3 (Cntn3) (Mus musculus (Mouse)).